A 92-amino-acid polypeptide reads, in one-letter code: LYR motif-containing protein 4 homolog (92 aa).

The stretch at 40–68 forms a coiled coil; the sequence is ANKAIRDFAEIDRQMEAGKQNLELIRRQV.

The protein belongs to the complex I LYR family. In terms of assembly, component of the mitochondrial core iron-sulfur cluster (ISC) assembly complex at least composed of the cysteine desulfurase Nfs1, the scaffold protein IscU, the accessory protein bcn92/Isd11/Lyrm4, and probably fh/frataxin. Interacts with Nfs1.

The protein resides in the mitochondrion. Its function is as follows. Stabilizing factor of the core iron-sulfur cluster (ISC) assembly complex that regulates the stability and cysteine desulfurase activity of Nfs1 and participates in the [2Fe-2S] clusters assembly on the scaffolding protein IscU. This Drosophila subobscura (Fruit fly) protein is LYR motif-containing protein 4 homolog.